We begin with the raw amino-acid sequence, 72 residues long: Translation initiation factor IF-1 (72 aa).

Residues 1–72 form the S1-like domain; it reads MAKDDVIEVE…TRGRITYRYK (72 aa). A Phosphotyrosine modification is found at Tyr-60.

This sequence belongs to the IF-1 family. In terms of assembly, component of the 30S ribosomal translation pre-initiation complex which assembles on the 30S ribosome in the order IF-2 and IF-3, IF-1 and N-formylmethionyl-tRNA(fMet); mRNA recruitment can occur at any time during PIC assembly.

It localises to the cytoplasm. Its function is as follows. One of the essential components for the initiation of protein synthesis. Stabilizes the binding of IF-2 and IF-3 on the 30S subunit to which N-formylmethionyl-tRNA(fMet) subsequently binds. Helps modulate mRNA selection, yielding the 30S pre-initiation complex (PIC). Upon addition of the 50S ribosomal subunit IF-1, IF-2 and IF-3 are released leaving the mature 70S translation initiation complex. This chain is Translation initiation factor IF-1, found in Geobacillus thermodenitrificans (strain NG80-2).